The primary structure comprises 954 residues: MSRAPDTHSDFIPRHIGPSDEDQATMLVAIGAASLDALIDEVVPPRIRSRAPLALPAARSETDVLQDLKRIAARNQIYRNYIGQGYYGTHTPNVVLRNVLENPAWYTAYTPYQPEISQGRLEALLNYQTMVADLTGLDISNASLLDEGTAAAEAMTLARRGSRSSSPVFFVSQHCHPQTLEVVRTRAEGLGIELVIGDESRGLPECFGVLLQYPHSLGGVADYRELAQAAHAQGAVVACVTDLLALALIEPPGQWGADIAVGSAQRFGVPFGFGGPHAGFMACRDAYKRNMPGRLVGVSKDAQGNPALRLALQTREQHIRREKATSNICTAQVLLAVMAGLYAVWHGPRGVRRIAERVQSLTGALRAALAGLGVKVANDTWFDTLSLETGAATPAILAAADCARINLRQVDGARLAVSLDETVTLADLQALVNVFAAGLGKDEVALAPPQASLDGIPAAVRRQGPILSHPVFSSVQSETDMLRYLRKLADKDLALDRTMIPLGSCTMKLNATAEMIPITWPEFALIHPFAPASQTPGYRELIEGLSAQLCEITGYDGISLQPNSGAQGEYAGLLAIRAYHQANGQPQRNVCLIPASAHGTNPASAQLAGMDVVVVASDANGNVDLADLRARIAQVGERLAALMITYPSTHGVFEEAVTEICDAVHEAGGQVYLDGANMNAMVGVAQPGKFGSDVSHLNLHKTFCIPHGGGGPGVGPVAVRAHLAPYLPGVLDARGRLDPEAKVGPVSAAPYGSAGILPIPYVYIALMGAEGLRRATEVAILNANYIATRLRGHYPVLYAGRNGRVAHECILDVRPLKETSGISAEDIAKRLMDYGFHAPTMSFPVAGTLMVEPTESEGLAELERFIEAMIAIRAEIAQVESGERDRDDNVLRNAPHTAQMLLAEEWHHDYPRQQAAYPVASLRENKYWPPVARVDNAYGDRNLVCACLPVEAYA.

Lysine 701 is modified (N6-(pyridoxal phosphate)lysine).

The protein belongs to the GcvP family. In terms of assembly, the glycine cleavage system is composed of four proteins: P, T, L and H. Pyridoxal 5'-phosphate is required as a cofactor.

It carries out the reaction N(6)-[(R)-lipoyl]-L-lysyl-[glycine-cleavage complex H protein] + glycine + H(+) = N(6)-[(R)-S(8)-aminomethyldihydrolipoyl]-L-lysyl-[glycine-cleavage complex H protein] + CO2. Functionally, the glycine cleavage system catalyzes the degradation of glycine. The P protein binds the alpha-amino group of glycine through its pyridoxal phosphate cofactor; CO(2) is released and the remaining methylamine moiety is then transferred to the lipoamide cofactor of the H protein. In Bordetella pertussis (strain Tohama I / ATCC BAA-589 / NCTC 13251), this protein is Glycine dehydrogenase (decarboxylating).